Here is a 305-residue protein sequence, read N- to C-terminus: Probable cell division protein WhiA (305 aa).

Residues 272–305 (SIQQLADSLTVPITKSGVNHRLRKINKIADELTD) constitute a DNA-binding region (H-T-H motif).

This sequence belongs to the WhiA family.

Functionally, involved in cell division and chromosome segregation. The protein is Probable cell division protein WhiA of Streptococcus suis (strain 98HAH33).